A 232-amino-acid chain; its full sequence is MKRAVVVFSGGQDSTTCLIQALQQYDEVHCITFDYGQRHRAEIDVARELAIQLGAKAHKVLDVGMLNELAVSSLTRDNIPVPSYSEEGEDSIPSTFVPGRNILFLTLAAIYAYQVQAQAVITGVCETDFSGYPDCRDEFVKALNHAIDLGIGRDIAFITPLMWLDKAETWALADYYQQLDRIRHDTLTCYNGIQGDGCGQCAACHLRAKGLEFYLANKPKVILSLKQKTGLV.

ATP is bound at residue 8-18 (FSGGQDSTTCL). Cys-189, Cys-198, Cys-201, and Cys-204 together coordinate Zn(2+).

This sequence belongs to the QueC family. It depends on Zn(2+) as a cofactor.

The catalysed reaction is 7-carboxy-7-deazaguanine + NH4(+) + ATP = 7-cyano-7-deazaguanine + ADP + phosphate + H2O + H(+). It functions in the pathway purine metabolism; 7-cyano-7-deazaguanine biosynthesis. Its function is as follows. Catalyzes the ATP-dependent conversion of 7-carboxy-7-deazaguanine (CDG) to 7-cyano-7-deazaguanine (preQ(0)). In Yersinia enterocolitica serotype O:8 / biotype 1B (strain NCTC 13174 / 8081), this protein is 7-cyano-7-deazaguanine synthase.